A 412-amino-acid polypeptide reads, in one-letter code: Putative competence-damage inducible protein (412 aa).

It belongs to the CinA family.

In Bacillus cereus (strain G9842), this protein is Putative competence-damage inducible protein.